The sequence spans 506 residues: Ribose import ATP-binding protein RbsA 2 (506 aa).

2 consecutive ABC transporter domains span residues 5 to 241 (LRLS…VGRR) and 251 to 498 (VRAA…TAGT). An ATP-binding site is contributed by 37–44 (GENGAGKS).

This sequence belongs to the ABC transporter superfamily. Ribose importer (TC 3.A.1.2.1) family. As to quaternary structure, the complex is composed of an ATP-binding protein (RbsA), two transmembrane proteins (RbsC) and a solute-binding protein (RbsB).

The protein resides in the cell inner membrane. The catalysed reaction is D-ribose(out) + ATP + H2O = D-ribose(in) + ADP + phosphate + H(+). Part of the ABC transporter complex RbsABC involved in ribose import. Responsible for energy coupling to the transport system. This is Ribose import ATP-binding protein RbsA 2 from Burkholderia ambifaria (strain ATCC BAA-244 / DSM 16087 / CCUG 44356 / LMG 19182 / AMMD) (Burkholderia cepacia (strain AMMD)).